Here is a 763-residue protein sequence, read N- to C-terminus: Phosphoglycerol transferase I (763 aa).

The next 4 helical transmembrane spans lie at 1-21, 26-46, 77-97, and 108-128; these read MSELLSFALFLASVLIYAWKA, WWFAATLTVLGLFVVLNITLF, ILPGIGIVLGLTAVFGALGWI, and FGYSLLALLLALGSVDASPAF.

It belongs to the OpgB family.

The protein resides in the cell inner membrane. It catalyses the reaction a phosphatidylglycerol + a membrane-derived-oligosaccharide D-glucose = a 1,2-diacyl-sn-glycerol + a membrane-derived-oligosaccharide 6-(glycerophospho)-D-glucose.. It functions in the pathway glycan metabolism; osmoregulated periplasmic glucan (OPG) biosynthesis. In terms of biological role, transfers a phosphoglycerol residue from phosphatidylglycerol to the membrane-bound nascent glucan backbones. The protein is Phosphoglycerol transferase I of Escherichia coli (strain ATCC 8739 / DSM 1576 / NBRC 3972 / NCIMB 8545 / WDCM 00012 / Crooks).